We begin with the raw amino-acid sequence, 75 residues long: UPF0154 protein MYPU_1460 (75 aa).

A helical transmembrane segment spans residues 8–28 (GLIVGLSILFFIIGGVVAFFV).

Belongs to the UPF0154 family.

The protein localises to the membrane. In Mycoplasmopsis pulmonis (strain UAB CTIP) (Mycoplasma pulmonis), this protein is UPF0154 protein MYPU_1460.